A 269-amino-acid chain; its full sequence is Ribonuclease HII (269 aa).

Residues 79-269 (TYLAGADEVG…SFLKNILNTF (191 aa)) form the RNase H type-2 domain. A divalent metal cation-binding residues include aspartate 85, glutamate 86, and aspartate 182.

It belongs to the RNase HII family. The cofactor is Mn(2+). Mg(2+) serves as cofactor.

It is found in the cytoplasm. It carries out the reaction Endonucleolytic cleavage to 5'-phosphomonoester.. In terms of biological role, endonuclease that specifically degrades the RNA of RNA-DNA hybrids. The chain is Ribonuclease HII from Clostridium novyi (strain NT).